The primary structure comprises 82 residues: Small ribosomal subunit protein bS16 (82 aa).

This sequence belongs to the bacterial ribosomal protein bS16 family.

The chain is Small ribosomal subunit protein bS16 from Acidobacterium capsulatum (strain ATCC 51196 / DSM 11244 / BCRC 80197 / JCM 7670 / NBRC 15755 / NCIMB 13165 / 161).